Here is a 591-residue protein sequence, read N- to C-terminus: Negative elongation factor D (591 aa).

The tract at residues 1 to 44 (MAGPAPGTIMGEDYFGNASEWGEEADGGQHQEDDSGEGEDDAEV) is disordered. Positions 34-44 (DSGEGEDDAEV) are enriched in acidic residues.

Belongs to the NELF-D family. The NELF complex is composed of NELFA, NELFB, NELFCD and NELFE; NELFA and NELFCD form a stable subcomplex that binds primarily through NELFCD to the N-terminus of NELFB. Binds RNA which may help to stabilize the NELF complex on nucleic acid. In vitro, the NELFA:NELFCD subcomplex binds to ssDNA and ssRNA in a sequence- and structure-dependent manner. Interacts with ARAF1. Interacts with PCF11. Interacts with NELFB. Interacts with KAT8.

It localises to the nucleus. Its function is as follows. Essential component of the NELF complex, a complex that negatively regulates the elongation of transcription by RNA polymerase II. The NELF complex, which acts via an association with the DSIF complex and causes transcriptional pausing, is counteracted by the P-TEFb kinase complex. The chain is Negative elongation factor D (Nelfcd) from Mus musculus (Mouse).